The primary structure comprises 365 residues: Peptide chain release factor 2 (365 aa).

An N5-methylglutamine modification is found at Gln252.

The protein belongs to the prokaryotic/mitochondrial release factor family. Methylated by PrmC. Methylation increases the termination efficiency of RF2.

It is found in the cytoplasm. Functionally, peptide chain release factor 2 directs the termination of translation in response to the peptide chain termination codons UGA and UAA. This chain is Peptide chain release factor 2, found in Acidithiobacillus ferrooxidans (strain ATCC 23270 / DSM 14882 / CIP 104768 / NCIMB 8455) (Ferrobacillus ferrooxidans (strain ATCC 23270)).